The sequence spans 332 residues: DNA repair and recombination protein RadA (332 aa).

ATP is bound at residue Gly-126 to Thr-133.

Belongs to the eukaryotic RecA-like protein family.

Involved in DNA repair and in homologous recombination. Binds and assemble on single-stranded DNA to form a nucleoprotein filament. Hydrolyzes ATP in a ssDNA-dependent manner and promotes DNA strand exchange between homologous DNA molecules. The polypeptide is DNA repair and recombination protein RadA (Pyrobaculum calidifontis (strain DSM 21063 / JCM 11548 / VA1)).